A 509-amino-acid polypeptide reads, in one-letter code: MPNVLSDDEELLNGLGSEIMKPSRQGNHMARTVKRWVNKERATTADLKNVNIDGVHGPVNTESYISPGQLYSTDSGNLFHAGRILVVLVGLPATSKTLLSVAITRYTRWLGVRTKSFHFSEYKESAKNIPSDYFCVVPTSKEGVAFVEKLRMQMLNDILAFFNDLSGQLAIYDALNIRKIDRKNLETTFSEIGVKVLFIESIVSDQEIMNRNIALALESNDYKGLSTDEAIDEYMRRLSVNEPYYEMMTHDEELSYIKYINLGKQIIVKDNIHGYLVNKIVFFLMNLRQKKGCVYFARCGTSDKDNYIHDEELNEEGIHYSQVLKDFVLQRIKQKRQAKKNSDSLVEVIDGSHDEDLKTSLIVWTGPRKRTHDTALFFSKEGIKVQQRSELRQLNPGSIADLTDQQIMDKFPSEYKESLKDPYHFRFPRAESYHDLAVRMEPLLLEMEHTSKDILIIAHESTLRVLYGYLMACTCVELPNLNFTRDKLVEISFSPFCNTVELLNIPLTS.

Position 6 is a phosphoserine (serine 6). The interval 6-291 is 6-phosphofructo-2-kinase; sequence SDDEELLNGL…FFLMNLRQKK (286 aa). 90–98 contributes to the ATP binding site; it reads GLPATSKTL. Aspartate 173 functions as the Proton donor/acceptor in the catalytic mechanism. 212 to 217 serves as a coordination point for ATP; sequence NIALAL. Arginine 237 provides a ligand contact to beta-D-fructose 6-phosphate. The fructose-2,6-bisphosphatase stretch occupies residues 292 to 466; it reads GCVYFARCGT…IAHESTLRVL (175 aa). Arginine 298 contributes to the beta-D-fructose 2,6-bisphosphate binding site. 415–418 lines the ATP pocket; sequence YKES. 2 residues coordinate beta-D-fructose 2,6-bisphosphate: tyrosine 433 and arginine 464. Residue 460–464 coordinates ATP; sequence ESTLR.

This sequence in the C-terminal section; belongs to the phosphoglycerate mutase family. Homodimer.

The protein resides in the cytoplasm. It carries out the reaction beta-D-fructose 2,6-bisphosphate + H2O = beta-D-fructose 6-phosphate + phosphate. The enzyme catalyses beta-D-fructose 6-phosphate + ATP = beta-D-fructose 2,6-bisphosphate + ADP + H(+). Functionally, synthesis and degradation of fructose 2,6-bisphosphate. In Saccharomyces cerevisiae (strain ATCC 204508 / S288c) (Baker's yeast), this protein is Putative 6-phosphofructo-2-kinase/fructose-2,6-bisphosphatase YLR345W.